We begin with the raw amino-acid sequence, 191 residues long: Ribonuclease HII (191 aa).

In terms of domain architecture, RNase H type-2 spans 4–191 (YTAAGLDEVG…HRKTFLSKIQ (188 aa)). Asp-10, Glu-11, and Asp-106 together coordinate a divalent metal cation.

Belongs to the RNase HII family. It depends on Mn(2+) as a cofactor. Mg(2+) is required as a cofactor.

The protein localises to the cytoplasm. It carries out the reaction Endonucleolytic cleavage to 5'-phosphomonoester.. In terms of biological role, endonuclease that specifically degrades the RNA of RNA-DNA hybrids. The polypeptide is Ribonuclease HII (Prochlorococcus marinus (strain SARG / CCMP1375 / SS120)).